The sequence spans 482 residues: MTVTDSTPEGNVTAELCNWVTELKPSDIPADVLQRAKHLLLDGIACGLVGSHVPWSEQAAKAIDDYEPEGYCSVIGYNRRYGPQAAAILNGSFIQAVELDDYHSAAPLHSASVLLPALFAAAEVQSKGHRKSVVSGLDFLVALVVGFETGPRVGSAMYGADLLSRGWHSGPVFGSPAAAAASSKLLGLSPDDTESAVGIACTQAGGLMAAQYEGMVKRVQHAFAARNGLFGALLARDGYVGIKKVFDRSYGGFLTMFTQGNGRTPQYKPEEVTTALGKEWQTTNIRVKLHACVGGCHGQIEALEKLQRNYPDRFAVDQLHNIRRITVSLSEPVFAHDGWAPEERPLTATGGQMNAAYIGAAQLVYGQVLLDQFEPHALDSDAVWSLIDKTTCVHSSEFDKPGHLCGARIVVEFNDGETVEDVVAMPKGFDPPITDDEIREKWRKLASSVIDSERLQRIENSVLSLETSADVSELLALISGEL.

The protein belongs to the PrpD family.

Its pathway is secondary metabolite biosynthesis. In terms of biological role, cis-aconitate decarboxylase-like protein; part of the gene cluster that mediates the biosynthesis of oryzines, natural products with an unusual maleidride backbone. The two subunits of the fungal fatty acid synthase oryfasA and oryfasB probably form octenoic acid. This fatty acid is most likely activated by the acyl-CoA ligase oryP to give octenyl-CoA before the citrate synthase-like protein oryE catalyzes condensation with oxaloacetate to form tricarboxylic acid. The next steps of the pathways are conjectural, but a favorite possible route has been proposed, beginning with decarboxylation and concomitant dehydration by the decarboxylase oryM, followed by tautomerization, which may lead to the production of a diene intermediate. Reduction of this diene intermediate could give the known metabolite piliformic acid. On the pathway to oryzine B and oryzine A, however, hydroxylation of the diene by the alpha-ketoglutarate-dependent dioxygenase oryG and lactonisation by the lactonohydrolases oryH or oryL could give oryzine B directly. Finally, enoyl reduction by the dehydrogenase oryD would then convert oryzine B into oryzine A. The chain is Cis-aconitate decarboxylase-like protein oryM from Aspergillus oryzae (strain ATCC 42149 / RIB 40) (Yellow koji mold).